Consider the following 84-residue polypeptide: Putative membrane protein insertion efficiency factor (84 aa).

The interval 60 to 84 is disordered; that stretch reads WSQPGEDPVPDHFSLKRNDTRKQSH. The span at 68 to 84 shows a compositional bias: basic and acidic residues; sequence VPDHFSLKRNDTRKQSH.

It belongs to the UPF0161 family.

It localises to the cell membrane. Could be involved in insertion of integral membrane proteins into the membrane. The polypeptide is Putative membrane protein insertion efficiency factor (Streptococcus gordonii (strain Challis / ATCC 35105 / BCRC 15272 / CH1 / DL1 / V288)).